Reading from the N-terminus, the 732-residue chain is Acylamino-acid-releasing enzyme (732 aa).

Blocked amino end (Met); alternate is present on M1. M1 bears the N-acetylmethionine; alternate mark. 2 positions are modified to phosphoserine: S185 and S187. Active-site charge relay system residues include S587, D675, and H707.

The protein belongs to the peptidase S9C family. Homotetramer.

The protein resides in the cytoplasm. The enzyme catalyses Cleavage of an N-acetyl or N-formyl amino acid from the N-terminus of a polypeptide.. Its activity is regulated as follows. Homotetramerization is required for activity. Tetramerization results in the formation of a gated channel which is involved in substrate selection and substrate access to the catalytic sites. Functionally, this enzyme catalyzes the hydrolysis of the N-terminal peptide bond of an N-acetylated peptide to generate an N-acetylated amino acid and a peptide with a free N-terminus. It preferentially cleaves off Ac-Ala, Ac-Met and Ac-Ser. Also, involved in the degradation of oxidized and glycated proteins. The polypeptide is Acylamino-acid-releasing enzyme (Apeh) (Rattus norvegicus (Rat)).